A 202-amino-acid polypeptide reads, in one-letter code: LexA repressor (202 aa).

The H-T-H motif DNA-binding region spans 28 to 48 (RAEIAQELGFKSPNAAEEHLK). Active-site for autocatalytic cleavage activity residues include S123 and K160.

The protein belongs to the peptidase S24 family. Homodimer.

It catalyses the reaction Hydrolysis of Ala-|-Gly bond in repressor LexA.. Represses a number of genes involved in the response to DNA damage (SOS response), including recA and lexA. In the presence of single-stranded DNA, RecA interacts with LexA causing an autocatalytic cleavage which disrupts the DNA-binding part of LexA, leading to derepression of the SOS regulon and eventually DNA repair. In Pseudomonas chlororaphis (Pseudomonas aureofaciens), this protein is LexA repressor.